Consider the following 838-residue polypeptide: Transforming acidic coiled-coil-containing protein 3 (838 aa).

Ser2 is modified (N-acetylserine). Phosphoserine occurs at positions 25, 39, and 71. A disordered region spans residues 123–227 (EADTDLLGDA…HGAEEECKAE (105 aa)). A compositionally biased stretch (low complexity) spans 132–164 (ASPAFGSGSSSESGPGALADLDCSSSSQSPGSS). 2 positions are modified to phosphoserine: Ser175 and Ser177. Positions 204–227 (DPCRTESQHKAETPHGAEEECKAE) are enriched in basic and acidic residues. Residues Ser250, Ser317, and Ser402 each carry the phosphoserine modification. The segment at 311–527 (GRAMTLSPQE…LELKEESFRD (217 aa)) is disordered. The span at 403–412 (YHLDWDKMDD) shows a compositional bias: basic and acidic residues. Ser434 carries the phosphoserine modification. Residues 492–503 (NSASTSLPTSCP) are compositionally biased toward polar residues. The segment at 522–577 (EESFRDPAEVLGTGAEVDYLEQFGTSSFKESALRKQSLYLKFDPLLRDSPGRPVPV) is necessary but not sufficient for spindle localization. Phosphoserine; by AURKA is present on Ser558. Residues 569 to 594 (DSPGRPVPVATETSSMHGANETPSGR) are disordered. Positions 579–591 (TETSSMHGANETP) are enriched in polar residues. The tract at residues 594-838 (RPREAKLVEF…DDLISKMEKI (245 aa)) is necessary but not sufficient for spindle localization. Residues 637–837 (LQYSQKDLDA…CDDLISKMEK (201 aa)) are a coiled coil.

It belongs to the TACC family. Interacts with microtubules. Interacts with CKAP5 independently of clathrin. Interacts with CKAP5 and clathrin forming the TACC3/ch-TOG/clathrin complex located at spindle inter-microtubules bridges; TACC3 (phosphorylated at Ser-558 by AURKA) and CLTC are proposed to form a composite microtubule interaction surface. Interacts with CCDC100/CEP120. The coiled coil C-terminal region interacts with AH receptor nuclear translocator protein (ARNT) and ARNT2. Interacts with GCN5L2 and PCAF.

The protein resides in the cytoplasm. Its subcellular location is the cytoskeleton. It is found in the microtubule organizing center. It localises to the centrosome. The protein localises to the spindle. The protein resides in the spindle pole. Plays a role in the microtubule-dependent coupling of the nucleus and the centrosome. Involved in the processes that regulate centrosome-mediated interkinetic nuclear migration (INM) of neural progenitors. Acts as a component of the TACC3/ch-TOG/clathrin complex proposed to contribute to stabilization of kinetochore fibers of the mitotic spindle by acting as inter-microtubule bridge. The TACC3/ch-TOG/clathrin complex is required for the maintenance of kinetochore fiber tension. May be involved in the control of cell growth and differentiation. May contribute to cancer. The chain is Transforming acidic coiled-coil-containing protein 3 (TACC3) from Homo sapiens (Human).